The primary structure comprises 515 residues: Maturase K (515 aa).

The protein belongs to the intron maturase 2 family. MatK subfamily.

It localises to the plastid. It is found in the chloroplast. Functionally, usually encoded in the trnK tRNA gene intron. Probably assists in splicing its own and other chloroplast group II introns. In Trillium luteum (Yellow wakerobin), this protein is Maturase K.